The chain runs to 357 residues: Putative DNA directed RNA polymerase subunit R470 (357 aa).

Belongs to the archaeal Rpo11/eukaryotic RPB11/RPC19 RNA polymerase subunit family.

It localises to the virion. The catalysed reaction is RNA(n) + a ribonucleoside 5'-triphosphate = RNA(n+1) + diphosphate. The chain is Putative DNA directed RNA polymerase subunit R470 from Acanthamoeba polyphaga mimivirus (APMV).